Reading from the N-terminus, the 603-residue chain is MINHKRLSVPRILTPVALAITLAACSSGPRQPDGVDVTLEPTQSVQNYMIQADSTEGSLRNDWLIMATKAAIQANQFDQAELLIKRLARQQLTEVQQAEWQLARATIQQKQGNYSQLLQLLNFKPWWKLPNEQWKDYYLMRADAYQGLNQAFEANRQLVAFGQYASSAEQREISSRIWMNFGSYSEYELTSLETEPNEDVLDGWLQLAVYAKTLSGNLSQLKNTLERWLSENPSHPAAIYTPEEIQNILSLDIVKPNNTALLLPLTGKFSPQAQLIRDGFVFAMMNDRNRDPSATLTVIDTNAYNADQIKQRLINKNIDFVVGPLEKENVELLHTTMDGSANGPTIPALALNIPEDVQPDSNICYLALSPEQEAAQAAKHLFSEGYNFPLILAPKGSFGERVTEAFNKEWRKYSSNKVAASYFGDKRQLQKDINEVFGLQESKQRIAQMQSLMRIKLETQPRSRRDVDAVYIVARSTELTLIKPFIEVAINPDAKAPQIFSSSRSNSGGATYEDLTGIIYSDIPLLIDPDPSVTAEMNELWSEQSNMEKRLKALGMDAYKLIGELPQMKVVPGYSVGGQTGILSIDNNCVVQRELSWAERGAL.

The N-terminal stretch at 1-24 is a signal peptide; it reads MINHKRLSVPRILTPVALAITLAA. Cysteine 25 carries the N-palmitoyl cysteine lipid modification. A lipid anchor (S-diacylglycerol cysteine) is attached at cysteine 25.

This sequence belongs to the LpoA family. Interacts with PBP1a.

Its subcellular location is the cell outer membrane. Its function is as follows. Regulator of peptidoglycan synthesis that is essential for the function of penicillin-binding protein 1A (PBP1a). This Vibrio antiquarius (strain Ex25) protein is Penicillin-binding protein activator LpoA.